The primary structure comprises 143 residues: D-aminoacyl-tRNA deacylase (143 aa).

The Gly-cisPro motif, important for rejection of L-amino acids signature appears at 135 to 136 (GP).

This sequence belongs to the DTD family. Homodimer.

Its subcellular location is the cytoplasm. It carries out the reaction glycyl-tRNA(Ala) + H2O = tRNA(Ala) + glycine + H(+). It catalyses the reaction a D-aminoacyl-tRNA + H2O = a tRNA + a D-alpha-amino acid + H(+). Functionally, an aminoacyl-tRNA editing enzyme that deacylates mischarged D-aminoacyl-tRNAs. Also deacylates mischarged glycyl-tRNA(Ala), protecting cells against glycine mischarging by AlaRS. Acts via tRNA-based rather than protein-based catalysis; rejects L-amino acids rather than detecting D-amino acids in the active site. By recycling D-aminoacyl-tRNA to D-amino acids and free tRNA molecules, this enzyme counteracts the toxicity associated with the formation of D-aminoacyl-tRNA entities in vivo and helps enforce protein L-homochirality. The chain is D-aminoacyl-tRNA deacylase from Mycolicibacterium smegmatis (strain ATCC 700084 / mc(2)155) (Mycobacterium smegmatis).